Consider the following 348-residue polypeptide: MLNIIRLLAESLPRISDGNENTDVWVNDMKFKMAYSFLNDDIDVIERELEQTVRSDYPLLSEAGLHLLQAGGKRIRPVFVLLSGMFGDYDINKIKYVAVTLEMIHMASLVHDDVIDDAELRRGKPTIKAKWDNRIAMYTGDYMLAGSLEMMTRINEPKAHRILSQTIVEVCLGEIEQIKDKYNMEQNLRTYLRRIKRKTALLIAVSCQLGAIASGADEKIHKALYWFGYYVGMSYQIIDDILDFTSTEEELGKPVGGDLLQGNVTLPVLYALKNPALKNQLKLINSETTQEQLEPIIEEIKKTDAIEASMAVSEMYLQKAFQKLNTLPRGRARSSLAAIAKYIGKRKF.

Isopentenyl diphosphate is bound by residues lysine 73, arginine 76, and histidine 105. Residues aspartate 112 and aspartate 116 each coordinate Mg(2+). Arginine 121 lines the all-trans-hexaprenyl diphosphate pocket. Position 122 (arginine 122) interacts with isopentenyl diphosphate. Residues lysine 198, threonine 199, and glutamine 236 each contribute to the all-trans-hexaprenyl diphosphate site.

It belongs to the FPP/GGPP synthase family. In terms of assembly, heterodimer of component I and II. Mg(2+) serves as cofactor.

The catalysed reaction is 4 isopentenyl diphosphate + (2E,6E)-farnesyl diphosphate = all-trans-heptaprenyl diphosphate + 4 diphosphate. Its function is as follows. Supplies heptaprenyl diphosphate, the precursor for the side chain of the isoprenoid quinone menaquinone-7 (MQ-7). In Bacillus subtilis (strain 168), this protein is Heptaprenyl diphosphate synthase component 2 (hepT).